Here is a 369-residue protein sequence, read N- to C-terminus: Queuine tRNA-ribosyltransferase accessory subunit 2 (369 aa).

The disordered stretch occupies residues 263-282 (SSKLTEVEEENGNDSSNDQD). The Zn(2+) site is built by C308, C310, C313, and H339.

The protein belongs to the queuine tRNA-ribosyltransferase family. QTRT2 subfamily. In terms of assembly, heterodimer of a catalytic subunit and an accessory subunit. Zn(2+) serves as cofactor.

Its subcellular location is the cytoplasm. In terms of biological role, non-catalytic subunit of the queuine tRNA-ribosyltransferase (TGT) that catalyzes the base-exchange of a guanine (G) residue with queuine (Q) at position 34 (anticodon wobble position) in tRNAs with GU(N) anticodons (tRNA-Asp, -Asn, -His and -Tyr), resulting in the hypermodified nucleoside queuosine (7-(((4,5-cis-dihydroxy-2-cyclopenten-1-yl)amino)methyl)-7-deazaguanosine). The polypeptide is Queuine tRNA-ribosyltransferase accessory subunit 2 (Trichoplax adhaerens (Trichoplax reptans)).